Consider the following 230-residue polypeptide: Ropporin-1-like protein (230 aa).

In terms of domain architecture, RIIa spans 17-46 (PELPDILKQFTKAAIRTQPADVLRWSAGYF).

Belongs to the ropporin family. In terms of assembly, component of the axonemal radial spoke complex 1 (RS1), at least composed of spoke head proteins RSPH1, RSPH3, RSPH9 and the cilia-specific component RSPH4A or sperm-specific component RSPH6A, spoke stalk proteins RSPH14, DNAJB13, DYDC1, ROPN1L and NME5, and the anchor protein IQUB. Interacts with FSCB; the interaction increases upon spermatozoa capacitation conditions. May interact with AKAP3. Interacts with CFAP61. Sumoylated, sumoylation decreases upon spermatozoa capacitation conditions.

Its subcellular location is the cell projection. The protein localises to the cilium. It localises to the flagellum. Functionally, functions as part of axonemal radial spoke complexes that play an important part in the motility of sperm and cilia. Important for male fertility. With ROPN1, involved in fibrous sheath integrity and sperm motility, plays a role in PKA-dependent signaling processes required for spermatozoa capacitation. This is Ropporin-1-like protein (ROPN1L) from Homo sapiens (Human).